Reading from the N-terminus, the 131-residue chain is ATP synthase epsilon chain, chloroplastic (131 aa).

This sequence belongs to the ATPase epsilon chain family. F-type ATPases have 2 components, CF(1) - the catalytic core - and CF(0) - the membrane proton channel. CF(1) has five subunits: alpha(3), beta(3), gamma(1), delta(1), epsilon(1). CF(0) has three main subunits: a, b and c.

It localises to the plastid. The protein localises to the chloroplast thylakoid membrane. Produces ATP from ADP in the presence of a proton gradient across the membrane. This Guillardia theta (Cryptophyte) protein is ATP synthase epsilon chain, chloroplastic.